Reading from the N-terminus, the 266-residue chain is Glucosamine-6-phosphate deaminase (266 aa).

The active-site Proton acceptor; for enolization step is Asp72. Catalysis depends on Asp141, which acts as the For ring-opening step. The Proton acceptor; for ring-opening step role is filled by His143. Catalysis depends on Glu148, which acts as the For ring-opening step.

The protein belongs to the glucosamine/galactosamine-6-phosphate isomerase family. NagB subfamily. In terms of assembly, homohexamer.

The catalysed reaction is alpha-D-glucosamine 6-phosphate + H2O = beta-D-fructose 6-phosphate + NH4(+). It functions in the pathway amino-sugar metabolism; N-acetylneuraminate degradation; D-fructose 6-phosphate from N-acetylneuraminate: step 5/5. Its activity is regulated as follows. Allosterically activated by N-acetylglucosamine 6-phosphate (GlcNAc6P). In terms of biological role, catalyzes the reversible isomerization-deamination of glucosamine 6-phosphate (GlcN6P) to form fructose 6-phosphate (Fru6P) and ammonium ion. The polypeptide is Glucosamine-6-phosphate deaminase (Salmonella typhi).